The sequence spans 174 residues: Pituitary tumor-transforming gene 1 protein-interacting protein (174 aa).

The N-terminal stretch at 1–29 is a signal peptide; it reads MASAVLGLTLRWVMFLSAVLLLLLPGASA. The Extracellular segment spans residues 30–93; it reads QEPPGVGCSE…RWGVCWVNFE (64 aa). One can recognise a PSI domain in the interval 36–89; it reads GCSEYTNRSCEECLRNVSCLWCNENKACLDYPVRKILPPASLCKLSSARWGVCW. N-linked (GlcNAc...) asparagine glycosylation is found at Asn-42 and Asn-51. Residues 94–114 form a helical membrane-spanning segment; that stretch reads ALIITMSVLGGSVLLGITVCC. The Cytoplasmic portion of the chain corresponds to 115 to 174; that stretch reads CCCCRRKRSRKPDKSDERAMREQEERRVRQEERRAEMKSRHDEIRKKYGLFKEQNPYEKF. Residues 126-155 are disordered; the sequence is PDKSDERAMREQEERRVRQEERRAEMKSRH. The stretch at 127-163 forms a coiled coil; that stretch reads DKSDERAMREQEERRVRQEERRAEMKSRHDEIRKKYG. Tyr-171 is modified (phosphotyrosine).

As to quaternary structure, interacts with PTTG1.

The protein localises to the cell membrane. The protein resides in the cytoplasm. It is found in the nucleus. Its function is as follows. May facilitate PTTG1 nuclear translocation. This is Pituitary tumor-transforming gene 1 protein-interacting protein (Pttg1ip) from Rattus norvegicus (Rat).